Reading from the N-terminus, the 90-residue chain is UPF0335 protein RPB_1426 (90 aa).

It belongs to the UPF0335 family.

The protein is UPF0335 protein RPB_1426 of Rhodopseudomonas palustris (strain HaA2).